The sequence spans 48 residues: FRGLAKLLKIGLKSFARVLKKVLPKAAKAGKALAKSMADENAIRQQNQ.

As to expression, expressed by the venom gland.

It localises to the secreted. The protein localises to the target cell membrane. In terms of biological role, disrupts cell membranes, particularly those rich in phosphocholine, through formation of pores. Has antimicrobial activity against Gram-negative bacterium E.coli, Gram-positive bacteria B.subtilis and S.aureus, and hemolytic activity against sheep, pig and guinea pig erythrocytes. Has insecticidal activity against S.frugiperda ovarian cells by opening non-selective ion channels. Enhances the insecticidal activity of spider venom neurotoxic peptides. The protein is M-oxotoxin-Ot1a of Oxyopes takobius (Lynx spider).